We begin with the raw amino-acid sequence, 181 residues long: 6,7-dimethyl-8-ribityllumazine synthase (181 aa).

Residues Phe24, 62 to 64 (SFE), and 86 to 88 (AII) each bind 5-amino-6-(D-ribitylamino)uracil. 91–92 (QT) is a (2S)-2-hydroxy-3-oxobutyl phosphate binding site. Catalysis depends on His94, which acts as the Proton donor. Phe119 lines the 5-amino-6-(D-ribitylamino)uracil pocket. Arg133 serves as a coordination point for (2S)-2-hydroxy-3-oxobutyl phosphate.

The protein belongs to the DMRL synthase family.

The catalysed reaction is (2S)-2-hydroxy-3-oxobutyl phosphate + 5-amino-6-(D-ribitylamino)uracil = 6,7-dimethyl-8-(1-D-ribityl)lumazine + phosphate + 2 H2O + H(+). It participates in cofactor biosynthesis; riboflavin biosynthesis; riboflavin from 2-hydroxy-3-oxobutyl phosphate and 5-amino-6-(D-ribitylamino)uracil: step 1/2. Functionally, catalyzes the formation of 6,7-dimethyl-8-ribityllumazine by condensation of 5-amino-6-(D-ribitylamino)uracil with 3,4-dihydroxy-2-butanone 4-phosphate. This is the penultimate step in the biosynthesis of riboflavin. This is 6,7-dimethyl-8-ribityllumazine synthase from Microcystis aeruginosa (strain NIES-843 / IAM M-2473).